Reading from the N-terminus, the 855-residue chain is Cytosolic phospholipase A2 zeta (855 aa).

Positions E27–F145 constitute a C2 domain. Ca(2+) contacts are provided by D60, D66, D116, D118, and D123. One can recognise a PLA2c domain in the interval M304–G855. Residue S393 is the Nucleophile of the active site. The active-site Proton acceptor is the D685.

Ca(2+) serves as cofactor. As to expression, strongly expressed in thyroid, expressed at intermediate level in stomach and at very low level in large intestine and prostate.

The protein resides in the cytoplasm. It localises to the cytosol. Its subcellular location is the cell membrane. It is found in the mitochondrion. The catalysed reaction is a 1,2-diacyl-sn-glycero-3-phosphocholine + H2O = a 1-acyl-sn-glycero-3-phosphocholine + a fatty acid + H(+). The enzyme catalyses a 1-O-alkyl-2-acyl-sn-glycero-3-phosphocholine + H2O = a 1-O-alkyl-sn-glycero-3-phosphocholine + a fatty acid + H(+). It carries out the reaction 1-hexadecanoyl-2-(9Z-octadecenoyl)-sn-glycero-3-phosphocholine + H2O = 2-(9Z-octadecenoyl)-sn-glycero-3-phosphocholine + hexadecanoate + H(+). It catalyses the reaction 1-hexadecanoyl-2-(9Z,12Z-octadecadienoyl)-sn-glycero-3-phosphocholine + H2O = (9Z,12Z)-octadecadienoate + 1-hexadecanoyl-sn-glycero-3-phosphocholine + H(+). The catalysed reaction is 1-hexadecanoyl-2-(5Z,8Z,11Z,14Z-eicosatetraenoyl)-sn-glycero-3-phosphocholine + H2O = 1-hexadecanoyl-sn-glycero-3-phosphocholine + (5Z,8Z,11Z,14Z)-eicosatetraenoate + H(+). The enzyme catalyses 1-hexadecanoyl-2-(9Z,12Z-octadecadienoyl)-sn-glycero-3-phosphoethanolamine + H2O = 1-hexadecanoyl-sn-glycero-3-phosphoethanolamine + (9Z,12Z)-octadecadienoate + H(+). It carries out the reaction 1-hexadecanoyl-2-(5Z,8Z,11Z,14Z-eicosatetraenoyl)-sn-glycero-3-phosphoethanolamine + H2O = 1-hexadecanoyl-sn-glycero-3-phosphoethanolamine + (5Z,8Z,11Z,14Z)-eicosatetraenoate + H(+). It catalyses the reaction 1-(5Z,8Z,11Z,14Z-eicosatetraenoyl)-2-O-hexadecyl-sn-glycero-3-phosphocholine + H2O = 2-O-hexadecyl-sn-glycero-3-phosphocholine + (5Z,8Z,11Z,14Z)-eicosatetraenoate + H(+). The catalysed reaction is 1-O-hexadecyl-2-(5Z,8Z,11Z,14Z)-eicosatetraenoyl-sn-glycero-3-phosphocholine + H2O = 1-O-hexadecyl-sn-glycero-3-phosphocholine + (5Z,8Z,11Z,14Z)-eicosatetraenoate + H(+). The enzyme catalyses 1-hexadecanoyl-sn-glycero-3-phosphocholine + H2O = sn-glycerol 3-phosphocholine + hexadecanoate + H(+). With respect to regulation, stimulated by cytosolic Ca(2+). Functionally, has calcium-dependent phospholipase and lysophospholipase activities with a potential role in membrane lipid remodeling and biosynthesis of lipid mediators. Preferentially hydrolyzes the ester bond of the fatty acyl group attached at sn-2 position of phospholipids (phospholipase A2 activity). Selectively hydrolyzes sn-2 arachidonoyl group from membrane phospholipids, providing the precursor for eicosanoid biosynthesis. In myocardial mitochondria, plays a major role in arachidonate release that is metabolically channeled to the formation of cardioprotective eicosanoids, epoxyeicosatrienoates (EETs). This chain is Cytosolic phospholipase A2 zeta (Pla2g4f), found in Mus musculus (Mouse).